We begin with the raw amino-acid sequence, 921 residues long: Isoleucine--tRNA ligase (921 aa).

A 'HIGH' region motif is present at residues Pro-57 to Thr-67. Glu-551 serves as a coordination point for L-isoleucyl-5'-AMP. The short motif at Lys-592–Ser-596 is the 'KMSKS' region element. Lys-595 is an ATP binding site. Zn(2+) contacts are provided by Cys-885, Cys-888, Cys-905, and Cys-908.

This sequence belongs to the class-I aminoacyl-tRNA synthetase family. IleS type 1 subfamily. As to quaternary structure, monomer. It depends on Zn(2+) as a cofactor.

It localises to the cytoplasm. The enzyme catalyses tRNA(Ile) + L-isoleucine + ATP = L-isoleucyl-tRNA(Ile) + AMP + diphosphate. Its function is as follows. Catalyzes the attachment of isoleucine to tRNA(Ile). As IleRS can inadvertently accommodate and process structurally similar amino acids such as valine, to avoid such errors it has two additional distinct tRNA(Ile)-dependent editing activities. One activity is designated as 'pretransfer' editing and involves the hydrolysis of activated Val-AMP. The other activity is designated 'posttransfer' editing and involves deacylation of mischarged Val-tRNA(Ile). This chain is Isoleucine--tRNA ligase, found in Kosmotoga olearia (strain ATCC BAA-1733 / DSM 21960 / TBF 19.5.1).